The chain runs to 634 residues: Bacteriophytochrome (634 aa).

C13 serves as a coordination point for biliverdin IXalpha. In terms of domain architecture, PAS 1 spans 13–118; it reads CAREPIHIPG…YPQQWLVEME (106 aa). Residues 13 to 514 are photosensory core domain; it reads CAREPIHIPG…ELMERKRFQQ (502 aa). The 155-residue stretch at 151 to 305 folds into the GAF domain; the sequence is RVAKGLRSLI…VTDAVARTLA (155 aa). Positions 325–508 are phytochrome-specific (PHY); it reads TVREKLITDF…SLRVLIELME (184 aa). The tract at residues 452 to 480 is tongue domain; sequence WAGNPQLAKLEDIPNSRLSPRKSFDLWQQ. A PAS 2 domain is found at 515 to 590; sequence DFTLLEASLS…ELLQDALRNG (76 aa). Residues 515–634 are PAS9, output module, not required to bind biliverdin IX-alpha, required for dimerization; the sequence is DFTLLEASLS…HWLLQLRDPE (120 aa).

The protein in the N-terminal section; belongs to the phytochrome family. Forms head-to-head homodimers. Contains one covalently linked biliverdin IX-alpha chromophore; present in the crystal structure as a mixture of Pr and Meta-R configurations.

Photoreceptor which exists in two forms that are reversibly interconvertible by light: far-red light (733 nm) converts protein to the red-absorbing (Pr) form, while red light (630 nm) partly converts the protein to the far-red-absorbing (Pfr) form. Regulates virulence of X.campestris pv. campestris on its host plants, perhaps by fine-tuning expression to ambient light levels and/or spatial cues. The Pr form may sense light and partially inhibit virulence; in the dark (Pfr form) biofilm and xanathan production rise and bacteria are more virulent. Strains overexpressing this protein have significantly decreased amounts of extracellular beta-1,4-endoglucanase, produce less xanthin and have decreased transcription of genes involved in virulence such as endoglucanases, type 2 secretion systems, xanthan production and flagellar-dependent motility. This Xanthomonas campestris pv. campestris (strain 8004) protein is Bacteriophytochrome (bphP).